Consider the following 106-residue polypeptide: Iron-sulfur cluster assembly protein CyaY (106 aa).

It belongs to the frataxin family.

Its function is as follows. Involved in iron-sulfur (Fe-S) cluster assembly. May act as a regulator of Fe-S biogenesis. This chain is Iron-sulfur cluster assembly protein CyaY, found in Shigella flexneri serotype 5b (strain 8401).